Reading from the N-terminus, the 247-residue chain is Uridylate kinase (247 aa).

Position 14-17 (Lys14–Gly17) interacts with ATP. Positions Gly22 to Gly27 are involved in allosteric activation by GTP. Residue Gly56 coordinates UMP. ATP is bound by residues Gly57 and Arg61. Residues Asp76 and Ile137 to Thr144 each bind UMP. Residues Asn165, Tyr171, and Asp174 each contribute to the ATP site.

The protein belongs to the UMP kinase family. Homohexamer.

It localises to the cytoplasm. The enzyme catalyses UMP + ATP = UDP + ADP. It functions in the pathway pyrimidine metabolism; CTP biosynthesis via de novo pathway; UDP from UMP (UMPK route): step 1/1. With respect to regulation, allosterically activated by GTP. Inhibited by UTP. In terms of biological role, catalyzes the reversible phosphorylation of UMP to UDP. This chain is Uridylate kinase, found in Streptococcus pneumoniae (strain ATCC BAA-255 / R6).